A 408-amino-acid chain; its full sequence is Arginine biosynthesis bifunctional protein ArgJ 1 (408 aa).

6 residues coordinate substrate: T154, K180, T191, E277, N403, and S408. The active-site Nucleophile is the T191.

This sequence belongs to the ArgJ family. In terms of assembly, heterotetramer of two alpha and two beta chains.

Its subcellular location is the cytoplasm. It catalyses the reaction N(2)-acetyl-L-ornithine + L-glutamate = N-acetyl-L-glutamate + L-ornithine. The catalysed reaction is L-glutamate + acetyl-CoA = N-acetyl-L-glutamate + CoA + H(+). It participates in amino-acid biosynthesis; L-arginine biosynthesis; L-ornithine and N-acetyl-L-glutamate from L-glutamate and N(2)-acetyl-L-ornithine (cyclic): step 1/1. Its pathway is amino-acid biosynthesis; L-arginine biosynthesis; N(2)-acetyl-L-ornithine from L-glutamate: step 1/4. In terms of biological role, catalyzes two activities which are involved in the cyclic version of arginine biosynthesis: the synthesis of N-acetylglutamate from glutamate and acetyl-CoA as the acetyl donor, and of ornithine by transacetylation between N(2)-acetylornithine and glutamate. The protein is Arginine biosynthesis bifunctional protein ArgJ 1 of Clostridium acetobutylicum (strain ATCC 824 / DSM 792 / JCM 1419 / IAM 19013 / LMG 5710 / NBRC 13948 / NRRL B-527 / VKM B-1787 / 2291 / W).